We begin with the raw amino-acid sequence, 414 residues long: Na(+)-translocating NADH-quinone reductase subunit B (414 aa).

4 helical membrane-spanning segments follow: residues 23–40 (WFAL…PGLV), 56–76 (IMIM…YNAG), 129–149 (FLPI…LFCM), and 164–184 (ILFA…LGIT). Residue Thr236 is modified to FMN phosphoryl threonine. A run of 5 helical transmembrane segments spans residues 268–288 (IPGS…AMIV), 297–317 (IIAG…VIGS), 322–342 (MFSM…GMFF), 358–378 (WWYG…NPAY), and 381–401 (GMML…HLVV).

This sequence belongs to the NqrB/RnfD family. In terms of assembly, composed of six subunits; NqrA, NqrB, NqrC, NqrD, NqrE and NqrF. It depends on FMN as a cofactor.

It is found in the cell inner membrane. It carries out the reaction a ubiquinone + n Na(+)(in) + NADH + H(+) = a ubiquinol + n Na(+)(out) + NAD(+). In terms of biological role, NQR complex catalyzes the reduction of ubiquinone-1 to ubiquinol by two successive reactions, coupled with the transport of Na(+) ions from the cytoplasm to the periplasm. NqrA to NqrE are probably involved in the second step, the conversion of ubisemiquinone to ubiquinol. This Vibrio vulnificus (strain CMCP6) protein is Na(+)-translocating NADH-quinone reductase subunit B.